We begin with the raw amino-acid sequence, 239 residues long: Myogenic factor 6 (239 aa).

The interval Q27–E64 is disordered. The bHLH domain occupies D96 to L147. Positions D155–K184 are disordered.

In terms of assembly, efficient DNA binding requires dimerization with another bHLH protein.

It is found in the nucleus. Its function is as follows. Involved in muscle differentiation (myogenic factor). Induces fibroblasts to differentiate into myoblasts. Probable sequence specific DNA-binding protein. The chain is Myogenic factor 6 (myf6) from Tetraodon nigroviridis (Spotted green pufferfish).